Consider the following 330-residue polypeptide: 4-hydroxythreonine-4-phosphate dehydrogenase (330 aa).

2 residues coordinate substrate: His136 and Thr137. Residues His166, His211, and His266 each coordinate a divalent metal cation. Substrate is bound by residues Lys274, Asn283, and Arg292.

It belongs to the PdxA family. Homodimer. Requires Zn(2+) as cofactor. Mg(2+) serves as cofactor. It depends on Co(2+) as a cofactor.

It localises to the cytoplasm. The enzyme catalyses 4-(phosphooxy)-L-threonine + NAD(+) = 3-amino-2-oxopropyl phosphate + CO2 + NADH. The protein operates within cofactor biosynthesis; pyridoxine 5'-phosphate biosynthesis; pyridoxine 5'-phosphate from D-erythrose 4-phosphate: step 4/5. Catalyzes the NAD(P)-dependent oxidation of 4-(phosphooxy)-L-threonine (HTP) into 2-amino-3-oxo-4-(phosphooxy)butyric acid which spontaneously decarboxylates to form 3-amino-2-oxopropyl phosphate (AHAP). This is 4-hydroxythreonine-4-phosphate dehydrogenase from Serratia proteamaculans (strain 568).